The following is a 516-amino-acid chain: Bifunctional purine biosynthesis protein PurH (516 aa).

Positions 1–146 constitute an MGS-like domain; that stretch reads MAPFALLSVS…KNHADVAVLT (146 aa).

The protein belongs to the PurH family.

It carries out the reaction (6R)-10-formyltetrahydrofolate + 5-amino-1-(5-phospho-beta-D-ribosyl)imidazole-4-carboxamide = 5-formamido-1-(5-phospho-D-ribosyl)imidazole-4-carboxamide + (6S)-5,6,7,8-tetrahydrofolate. It catalyses the reaction IMP + H2O = 5-formamido-1-(5-phospho-D-ribosyl)imidazole-4-carboxamide. It functions in the pathway purine metabolism; IMP biosynthesis via de novo pathway; 5-formamido-1-(5-phospho-D-ribosyl)imidazole-4-carboxamide from 5-amino-1-(5-phospho-D-ribosyl)imidazole-4-carboxamide (10-formyl THF route): step 1/1. It participates in purine metabolism; IMP biosynthesis via de novo pathway; IMP from 5-formamido-1-(5-phospho-D-ribosyl)imidazole-4-carboxamide: step 1/1. The protein is Bifunctional purine biosynthesis protein PurH of Parasynechococcus marenigrum (strain WH8102).